The sequence spans 88 residues: Large ribosomal subunit protein bL31B (88 aa).

It belongs to the bacterial ribosomal protein bL31 family. Type B subfamily. As to quaternary structure, part of the 50S ribosomal subunit.

This is Large ribosomal subunit protein bL31B from Corynebacterium glutamicum (strain R).